The primary structure comprises 440 residues: Glycerol-3-phosphate dehydrogenase [NAD(+)], chloroplastic (440 aa).

A chloroplast-targeting transit peptide spans 1–47 (MAAAAAATFLPHTPTPRRRLAVAVHSPTRRRLSLVFSGPPDGALSVA). Positions 57-76 (EEAAAAVSAPRGGGGGGGKE) are disordered. NAD(+) is bound by residues 114–119 (GGGSFG), Phe191, Lys214, and Ala248. Lys214 is a binding site for substrate. The active-site Proton acceptor is the Lys299. Positions 363 and 389 each coordinate NAD(+). 363–364 (RN) serves as a coordination point for substrate.

The protein belongs to the NAD-dependent glycerol-3-phosphate dehydrogenase family.

Its subcellular location is the plastid. It localises to the chloroplast. The catalysed reaction is sn-glycerol 3-phosphate + NAD(+) = dihydroxyacetone phosphate + NADH + H(+). The protein operates within membrane lipid metabolism; glycerophospholipid metabolism. Its function is as follows. Required to supply glycerol-3-phosphate in the chloroplast for the synthesis of glycerolipids. The protein is Glycerol-3-phosphate dehydrogenase [NAD(+)], chloroplastic of Oryza sativa subsp. japonica (Rice).